A 198-amino-acid polypeptide reads, in one-letter code: Small ribosomal subunit protein uS11 (198 aa).

2 stretches are compositionally biased toward low complexity: residues 1-11 and 19-58; these read MSGTEAGAGEP and EAAQ…TAQP. 2 disordered regions span residues 1-72 and 178-198; these read MSGT…TPAD and DVTP…GRRV. A compositionally biased stretch (basic residues) spans 187-198; sequence TRKKGGKRGRRV.

Belongs to the universal ribosomal protein uS11 family. In terms of assembly, part of the 30S ribosomal subunit.

Functionally, located on the platform of the 30S subunit. The sequence is that of Small ribosomal subunit protein uS11 from Cenarchaeum symbiosum (strain A).